A 173-amino-acid polypeptide reads, in one-letter code: RTX-III toxin-activating lysine-acyltransferase ApxIIC (173 aa).

Active-site residues include H29 and D98.

The protein belongs to the RTX toxin acyltransferase family. Homodimer.

Its subcellular location is the cytoplasm. It carries out the reaction a fatty acyl-[ACP] + L-lysyl-[protein] = N(6)-(fatty acyl)-L-lysyl-[protein] + holo-[ACP] + H(+). Protein-lysine acyltransferase that catalyzes fatty acylation of the protoxin, thereby converting it to the active toxin. This is RTX-III toxin-activating lysine-acyltransferase ApxIIC (apxIIIC) from Actinobacillus pleuropneumoniae (Haemophilus pleuropneumoniae).